The sequence spans 602 residues: Probable translation initiation factor IF-2 (602 aa).

In terms of domain architecture, tr-type G spans 15–230; the sequence is LRTPIVAVLG…VLMGLSQRYL (216 aa). The G1 stretch occupies residues 24-31; it reads GHVDHGKT. A GTP-binding site is contributed by 24–31; that stretch reads GHVDHGKT. A G2 region spans residues 49–53; the sequence is AITQH. Residues 86–89 are G3; it reads DTPG. GTP is bound by residues 86–90 and 140–143; these read DTPGH and NKID. Residues 140–143 are G4; the sequence is NKID. Residues 208–210 are G5; sequence SAE.

The protein belongs to the TRAFAC class translation factor GTPase superfamily. Classic translation factor GTPase family. IF-2 subfamily.

Function in general translation initiation by promoting the binding of the formylmethionine-tRNA to ribosomes. Seems to function along with eIF-2. The protein is Probable translation initiation factor IF-2 of Natronomonas pharaonis (strain ATCC 35678 / DSM 2160 / CIP 103997 / JCM 8858 / NBRC 14720 / NCIMB 2260 / Gabara) (Halobacterium pharaonis).